The chain runs to 327 residues: Ribonucleoside-diphosphate reductase small chain (327 aa).

Fe cation contacts are provided by D70, E101, and H104. The active site involves Y108. E164, E198, and H201 together coordinate Fe cation.

Belongs to the ribonucleoside diphosphate reductase small chain family. As to quaternary structure, heterotetramer composed of a homodimer of the large subunit (R1) and a homodimer of the small subunit (R2). Larger multisubunit protein complex are also active, composed of (R1)n(R2)n. Requires Fe cation as cofactor.

The catalysed reaction is a 2'-deoxyribonucleoside 5'-diphosphate + [thioredoxin]-disulfide + H2O = a ribonucleoside 5'-diphosphate + [thioredoxin]-dithiol. Ribonucleoside-diphosphate reductase holoenzyme provides the precursors necessary for viral DNA synthesis. Allows virus growth in non-dividing cells. Catalyzes the biosynthesis of deoxyribonucleotides from the corresponding ribonucleotides. The sequence is that of Ribonucleoside-diphosphate reductase small chain from Ornithodoros (relapsing fever ticks).